Consider the following 440-residue polypeptide: Cell division protein FtsA (440 aa).

This sequence belongs to the FtsA/MreB family. Self-interacts. Interacts with FtsZ.

The protein localises to the cell membrane. Its function is as follows. Cell division protein that is involved in the assembly of the Z ring. May serve as a membrane anchor for the Z ring. This chain is Cell division protein FtsA, found in Enterococcus faecalis (strain ATCC 700802 / V583).